A 34-amino-acid polypeptide reads, in one-letter code: Photosystem II reaction center protein M (34 aa).

The helical transmembrane segment at 5-25 threads the bilayer; that stretch reads ILGLTATALFIIIPTSFLLIL.

It belongs to the PsbM family. PSII is composed of 1 copy each of membrane proteins PsbA, PsbB, PsbC, PsbD, PsbE, PsbF, PsbH, PsbI, PsbJ, PsbK, PsbL, PsbM, PsbT, PsbX, PsbY, PsbZ, Psb30/Ycf12, at least 3 peripheral proteins of the oxygen-evolving complex and a large number of cofactors. It forms dimeric complexes.

It is found in the plastid. It localises to the chloroplast thylakoid membrane. Its function is as follows. One of the components of the core complex of photosystem II (PSII). PSII is a light-driven water:plastoquinone oxidoreductase that uses light energy to abstract electrons from H(2)O, generating O(2) and a proton gradient subsequently used for ATP formation. It consists of a core antenna complex that captures photons, and an electron transfer chain that converts photonic excitation into a charge separation. This subunit is found at the monomer-monomer interface. This is Photosystem II reaction center protein M from Stigeoclonium helveticum (Green alga).